Consider the following 248-residue polypeptide: Murein peptide amidase A (248 aa).

The region spanning 3–245 (RYYSNNQEIT…DAFIALLQHD (243 aa)) is the Peptidase M14 domain. Positions 60, 63, and 168 each coordinate Zn(2+). Residue Glu-221 is the Proton donor/acceptor of the active site.

This sequence belongs to the peptidase M14 family. In terms of assembly, homodimer. Requires Zn(2+) as cofactor.

The protein resides in the cytoplasm. It carries out the reaction L-alanyl-gamma-D-glutamyl-meso-2,6-diaminopimelate + H2O = L-alanyl-D-glutamate + meso-2,6-diaminopimelate. The protein operates within cell wall degradation; peptidoglycan degradation. In terms of biological role, involved in muropeptide degradation. Catalyzes the hydrolysis of the gamma-D-glutamyl-diaminopimelic acid (gamma-D-Glu-Dap) amide bond in the murein tripeptide L-alanyl-gamma-D-glutamyl-meso-diaminopimelic acid, leading to the formation of L-Ala-gamma-D-Glu and Dap. Has weak activity with L-Ala-gamma-D-Glu-L-Lys, MurNAc-tripeptide and gamma-D-Glu-meso-Dap. Cannot hydrolyze murein tetrapeptide. This is Murein peptide amidase A from Vibrio campbellii (strain ATCC BAA-1116).